Consider the following 465-residue polypeptide: Juvenile hormone epoxide hydrolase 2 (465 aa).

Residues 7–27 (ILWIAIVIGLGVLYYEITKEF) form a helical membrane-spanning segment. D224 acts as the Nucleophile in catalysis. Residue Y370 is the Proton donor of the active site. H427 (proton acceptor) is an active-site residue.

Belongs to the peptidase S33 family.

The protein localises to the microsome membrane. It localises to the endoplasmic reticulum membrane. The catalysed reaction is cis-stilbene oxide + H2O = (1R,2R)-hydrobenzoin. It carries out the reaction 1-(4-methoxyphenyl)-N-methyl-N-[(3-methyloxetan-3-yl)methyl]methanamine + H2O = 2-{[(4-methoxybenzyl)(methyl)amino]methyl}-2-methylpropane-1,3-diol. Catalyzes juvenile hormone hydrolysis. This chain is Juvenile hormone epoxide hydrolase 2, found in Ctenocephalides felis (Cat flea).